We begin with the raw amino-acid sequence, 187 residues long: Peptidyl-tRNA hydrolase (187 aa).

Y14 is a tRNA binding site. H19 functions as the Proton acceptor in the catalytic mechanism. TRNA contacts are provided by F60 and N62.

Belongs to the PTH family. As to quaternary structure, monomer.

The protein resides in the cytoplasm. The enzyme catalyses an N-acyl-L-alpha-aminoacyl-tRNA + H2O = an N-acyl-L-amino acid + a tRNA + H(+). Functionally, hydrolyzes ribosome-free peptidyl-tRNAs (with 1 or more amino acids incorporated), which drop off the ribosome during protein synthesis, or as a result of ribosome stalling. Its function is as follows. Catalyzes the release of premature peptidyl moieties from peptidyl-tRNA molecules trapped in stalled 50S ribosomal subunits, and thus maintains levels of free tRNAs and 50S ribosomes. The chain is Peptidyl-tRNA hydrolase from Pseudothermotoga lettingae (strain ATCC BAA-301 / DSM 14385 / NBRC 107922 / TMO) (Thermotoga lettingae).